The chain runs to 75 residues: MAGLLQVRDALALRATSGAQLSQSLATPLPLVQAMLDRLTAMGKVERIEQDDGACLSGGCKSCPQPRGAARCSTG.

The iron-sulfur cluster site is built by Cys-55, Cys-60, Cys-63, and Cys-72.

This sequence belongs to the FeoC family.

Its function is as follows. May function as a transcriptional regulator that controls feoABC expression. This chain is Probable [Fe-S]-dependent transcriptional repressor, found in Serratia marcescens.